The chain runs to 481 residues: PRAME family member 22 (481 aa).

The LRR 1; degenerate repeat unit spans residues 99-126; it reads RWKLQVLELRDVDENFWTIWSGARPLSC. The LRR 2; degenerate repeat unit spans residues 181 to 205; it reads HLCCTKVVNYSMSILNFRNILETVY. The LRR 3; degenerate repeat unit spans residues 206–232; the sequence is PDSIQVLEIWNMCWPCMIVEFSRYLSQ. One copy of the LRR 4; degenerate repeat lies at 233–267; sequence MRNLRKLFISDGCRYLLSSDSQEQLVAEFSSVLLR. LRR repeat units lie at residues 268-293, 294-325, 326-344, 350-377, and 378-402; these read LEYL…IRCL, RSPL…SQLK, QLNL…PLRA, AATL…ALSC, and CSNL…LLRH.

Belongs to the PRAME family.

This chain is PRAME family member 22, found in Homo sapiens (Human).